An 850-amino-acid polypeptide reads, in one-letter code: Receptor-like protein kinase ANXUR1 (850 aa).

An N-terminal signal peptide occupies residues 1–26; it reads MSGKTRILFFLTCLSFLLVFPTRSNG. Residues 27–429 are Extracellular-facing; sequence QDLALSCGTS…KKEFKNEKRH (403 aa). Residues asparagine 114, asparagine 132, asparagine 292, asparagine 302, and asparagine 330 are each glycosylated (N-linked (GlcNAc...) asparagine). A helical membrane pass occupies residues 430–450; the sequence is AFIIGSAGGVLAVLIGALCFT. Residues 451–850 lie on the Cytoplasmic side of the membrane; it reads AYKKKQGYQG…FSQIVNPKGR (400 aa). The Protein kinase domain maps to 517–790; that stretch reads FDDSNVIGVG…GDVLWNLEFA (274 aa). ATP-binding positions include 523 to 531 and lysine 545; that span reads IGVGGFGKV. The active-site Proton acceptor is the aspartate 641. The segment at 796-850 is disordered; it reads TADGTRHRTPNNGGSSEDLGRGGMAVNVAGRDDVSDLSSEDNTEIFSQIVNPKGR. Residues 839 to 850 are compositionally biased toward polar residues; the sequence is EIFSQIVNPKGR.

The protein belongs to the protein kinase superfamily. Ser/Thr protein kinase family. As to expression, expressed in pollen, but not in pistils or seedlings.

It localises to the cell membrane. The catalysed reaction is L-seryl-[protein] + ATP = O-phospho-L-seryl-[protein] + ADP + H(+). The enzyme catalyses L-threonyl-[protein] + ATP = O-phospho-L-threonyl-[protein] + ADP + H(+). Its function is as follows. Receptor-like protein kinase that controls pollen tube behavior by directing rupture at proper timing to release the sperm cell. This Arabidopsis thaliana (Mouse-ear cress) protein is Receptor-like protein kinase ANXUR1 (ANX1).